The following is a 426-amino-acid chain: Histidine--tRNA ligase (426 aa).

The protein belongs to the class-II aminoacyl-tRNA synthetase family. As to quaternary structure, homodimer.

It is found in the cytoplasm. It catalyses the reaction tRNA(His) + L-histidine + ATP = L-histidyl-tRNA(His) + AMP + diphosphate + H(+). This is Histidine--tRNA ligase from Streptococcus gordonii (strain Challis / ATCC 35105 / BCRC 15272 / CH1 / DL1 / V288).